An 876-amino-acid polypeptide reads, in one-letter code: Probable LRR receptor-like protein kinase At1g51890 (876 aa).

A signal peptide spans 1–19 (MRFLSFLIFVFAVLGLVQA). Topologically, residues 20–500 (QDQSGFISLD…TGKNSTNVVA (481 aa)) are extracellular. Residues Asn45, Asn90, Asn138, Asn177, Asn251, Asn259, Asn284, Asn290, Asn327, Asn335, Asn397, Asn412, and Asn417 are each glycosylated (N-linked (GlcNAc...) asparagine). LRR repeat units lie at residues 407 to 430 (QIIS…SKLT), 431 to 453 (HLRE…FSDM), and 455 to 476 (NLTL…ETLQ). Asn455, Asn460, Asn468, Asn481, and Asn494 each carry an N-linked (GlcNAc...) asparagine glycan. A helical membrane pass occupies residues 501–521 (IAASVASVFAVLVILAIVFVV). Residues 522 to 872 (IRKKQRTNEA…FSPSSASDFS (351 aa)) lie on the Cytoplasmic side of the membrane. Thr561 bears the Phosphothreonine mark. Residues 570-842 (KNFERVLGKG…HVVMELNECL (273 aa)) form the Protein kinase domain. ATP-binding positions include 576 to 584 (LGKGGFGTV) and Lys597. The residue at position 642 (Tyr642) is a Phosphotyrosine. Asp694 serves as the catalytic Proton acceptor. Phosphothreonine is present on residues Thr729 and Thr734. A Phosphotyrosine modification is found at Tyr742.

Belongs to the protein kinase superfamily. Ser/Thr protein kinase family.

The protein localises to the cell membrane. It catalyses the reaction L-seryl-[protein] + ATP = O-phospho-L-seryl-[protein] + ADP + H(+). It carries out the reaction L-threonyl-[protein] + ATP = O-phospho-L-threonyl-[protein] + ADP + H(+). The protein is Probable LRR receptor-like protein kinase At1g51890 of Arabidopsis thaliana (Mouse-ear cress).